Reading from the N-terminus, the 470-residue chain is Meiosis-specific with OB domain-containing protein (470 aa).

Positions 167-272 form a DNA-binding region, OB; that stretch reads IINVLAAVRS…EANILLNFIR (106 aa).

It belongs to the MEIOB family. As to quaternary structure, component of a multiprotein complex with RPA2 and SPATA22. Interacts with SPATA22. Interacts with the complex BRME1:HSF2BP:BRCA2.

It is found in the cytoplasm. It localises to the nucleus. The protein localises to the chromosome. Its function is as follows. Single-stranded DNA-binding protein required for homologous recombination in meiosis I. Required for double strand breaks (DSBs) repair and crossover formation and promotion of faithful and complete synapsis. Not required for the initial loading of recombinases but required to maintain a proper number of RAD51 and DMC1 foci after the zygotene stage. May act by ensuring the stabilization of recombinases, which is required for successful homology search and meiotic recombination. Displays Single-stranded DNA 3'-5' exonuclease activity in vitro. In Rattus norvegicus (Rat), this protein is Meiosis-specific with OB domain-containing protein.